Here is a 727-residue protein sequence, read N- to C-terminus: MAFQKAVKGTILVGGGALATVLGLSHFAHYKRKQVNLAFVEAADCISEPVNREPPSREAQILTLKNTSEFDVLVIGGGATGSGCALDAVTRGLKTALVERDDFSSGTSSRSTKLIHGGVRYLQKAIMKLDIEQYRMVKEALHERANLLEIAPHLSAPLPIMLPIYKWWQLPYYWVGIKLYDLVAGSNCLKSSYVLSKSRALEHFPMLQKDKLVGAIVYYDGQHNDARMNLAIALTAARYGAATANYMEVMSLLKKTDPQTGKERVSGARCKDVLTGEEFDVRAKCVINATGPFTDTVRKMDDKDTTAICQPSAGVHIVMPGYYSPESMGLLDPATSDGRVIFFLPWQKMTIAGTTDTPTDVTHHPIPSEEDINFILNEVRNYLSCDVEVRRGDVLAAWSGIRPLVTDPKSADTKSISRNHVVDISESGLITIAGGKWTTYRSMAEDTINAAVKAHNLKAGPSRTVGLFLQGGKDWSPTLYIRLVQDYGLESEVAQHLAATYGDKAFEVAKMASVTGKRWPIVGVRLVSEFPYIEAEVKYGIKEYACTAVDMISRRTRLAFLNVQAAEEALPRIVELMGRELNWDDSKKEEELETARKFLYYEMGYKSRSEQLTDRSEISLLPSDIDRYKKRFHKFDADQKGFITIVDVQRVLESIGVQMDENTLHEILNEVDLNKNGQVELNEFLQLMSAIQKGRVSGSRLAILMKTAEENLDRRVPIPVDRSCGGL.

A mitochondrion-targeting transit peptide spans 1 to 42 (MAFQKAVKGTILVGGGALATVLGLSHFAHYKRKQVNLAFVEA). 71 to 99 (DVLVIGGGATGSGCALDAVTRGLKTALVE) contributes to the FAD binding site. Y601 bears the Phosphotyrosine mark. EF-hand domains lie at 623–658 (SDID…IGVQ) and 659–694 (MDEN…IQKG). 5 residues coordinate Ca(2+): D672, N674, N676, Q678, and E683.

The protein belongs to the FAD-dependent glycerol-3-phosphate dehydrogenase family. It depends on FAD as a cofactor.

It is found in the mitochondrion. It carries out the reaction a quinone + sn-glycerol 3-phosphate = dihydroxyacetone phosphate + a quinol. The protein operates within polyol metabolism; glycerol degradation via glycerol kinase pathway; glycerone phosphate from sn-glycerol 3-phosphate (aerobic route): step 1/1. Its activity is regulated as follows. Calcium-binding enhance the activity of the enzyme. In terms of biological role, calcium-responsive mitochondrial glycerol-3-phosphate dehydrogenase which seems to be a key component of the pancreatic beta-cell glucose-sensing device. The sequence is that of Glycerol-3-phosphate dehydrogenase, mitochondrial (GPD2) from Bos taurus (Bovine).